Consider the following 433-residue polypeptide: Glutamyl-tRNA reductase (433 aa).

Residues 49–52, Ser-114, 119–121, and Gln-125 contribute to the substrate site; these read TCNR and EPQ. Residue Cys-50 is the Nucleophile of the active site. Residue 201–206 participates in NADP(+) binding; sequence GAGETI.

The protein belongs to the glutamyl-tRNA reductase family. As to quaternary structure, homodimer.

The enzyme catalyses (S)-4-amino-5-oxopentanoate + tRNA(Glu) + NADP(+) = L-glutamyl-tRNA(Glu) + NADPH + H(+). The protein operates within porphyrin-containing compound metabolism; protoporphyrin-IX biosynthesis; 5-aminolevulinate from L-glutamyl-tRNA(Glu): step 1/2. In terms of biological role, catalyzes the NADPH-dependent reduction of glutamyl-tRNA(Glu) to glutamate 1-semialdehyde (GSA). The protein is Glutamyl-tRNA reductase of Histophilus somni (strain 129Pt) (Haemophilus somnus).